A 509-amino-acid polypeptide reads, in one-letter code: Maturase K (509 aa).

Belongs to the intron maturase 2 family. MatK subfamily.

Its subcellular location is the plastid. It localises to the chloroplast. In terms of biological role, usually encoded in the trnK tRNA gene intron. Probably assists in splicing its own and other chloroplast group II introns. This Trifolium semipilosum (Kenya clover) protein is Maturase K.